Here is a 117-residue protein sequence, read N- to C-terminus: Ig lambda-1 chain V region (117 aa).

A signal peptide spans 1–20 (MAWISLILSLLALSSGGAIS). Q21 bears the Pyrrolidone carboxylic acid mark. One can recognise an Ig-like domain in the interval 21-117 (QAVVTQESAL…YFCALWYSNH (97 aa)).

This is Ig lambda-1 chain V region from Mus musculus (Mouse).